The primary structure comprises 132 residues: Protein NrdI (132 aa).

This sequence belongs to the NrdI family.

Functionally, probably involved in ribonucleotide reductase function. The protein is Protein NrdI of Bartonella quintana (strain Toulouse) (Rochalimaea quintana).